The primary structure comprises 404 residues: Acyl-[acyl-carrier-protein] desaturase 7, chloroplastic (404 aa).

A chloroplast-targeting transit peptide spans 1-39; the sequence is MAASATTSTLAVTMFGYPNRNCHLKPPATATLRFWRSAA. The Fe cation site is built by E138, E176, H179, E229, E262, and H265.

Belongs to the fatty acid desaturase type 2 family. Homodimer. Fe(2+) serves as cofactor.

It localises to the plastid. The protein resides in the chloroplast. The protein operates within lipid metabolism; fatty acid metabolism. Introduces a cis double bond in the acyl chain of an acyl-[acyl-carrier protein]. In Oryza sativa subsp. indica (Rice), this protein is Acyl-[acyl-carrier-protein] desaturase 7, chloroplastic.